A 651-amino-acid polypeptide reads, in one-letter code: MNILGFFQRLGRALQLPIAVLPVAALLLRFGQPDLLNVPFIAQAGGAIFDNLALIFAIGVASSWSKDNAGSAALAGAVGYFVMTKAMVTINPEINMGVLAGIITGLVAGAVYNRWAGIKLPDFLSFFGGKRFVPIATGFFCLILAAIFGYVWPPVQHAIHSGGEWIVSAGALGSGIFGFINRLLIPTGLHQVLNTIAWFQIGEFTNAAGTVFHGDINRFYAGDGTAGMFMSGFFPIMMFGLPGAALAMYLAAPKARRPMVGGMLLSVAITAFLTGVTEPLEFLFLFLAPLLYLLHAVLTGISLFIATALGIHAGFSFSAGAIDYVLMYSLPAASKNVWMLLVMGVVFFFVYFLLFSAVIRMFNLKTPGREDKAADVVTEEANSNTEEGLTQLATSYIAAVGGTDNLKAIDACITRLRLTVGDSAKVNDAACKRLGASGVVKLNKQTIQVIVGAKAESIGDEMKKVVTRGPVAAAAAAPAGNVATAAPAAKPQAVANAKTVESLVSPITGDVVALEQVPDEAFASKAVGDGIAVKPTDNIVVAPAAGTVVKIFNTNHAFCLETNNGAEIVVHMGIDTVALEGKGFKRLVEEGTDVKAGEPILEMDLDFLNANARSMISPVVCSNSDDYSALVILASGKVVAGQTPLYEIKGK.

Positions 1-371 (MNILGFFQRL…FNLKTPGRED (371 aa)) constitute a PTS EIIC type-1 domain. 12 consecutive transmembrane segments (helical) span residues 16–36 (LPIA…PDLL), 40–60 (FIAQ…AIGV), 70–90 (GSAA…MVTI), 92–112 (PEIN…GAVY), 132–152 (FVPI…GYVW), 165–185 (WIVS…RLLI), 192–212 (VLNT…GTVF), 232–252 (GFFP…YLAA), 264–284 (LLSV…EFLF), 285–305 (LFLA…SLFI), 308–328 (ALGI…VLMY), and 339–359 (MLLV…SAVI). The PTS EIIB type-1 domain maps to 390–472 (TQLATSYIAA…KKVVTRGPVA (83 aa)). Cys412 serves as the catalytic Phosphocysteine intermediate; for EIIB activity. Cys412 is subject to Phosphocysteine; by EIIA. Residues 519-623 (DEAFASKAVG…SMISPVVCSN (105 aa)) form the PTS EIIA type-1 domain. His556 and His571 together coordinate Zn(2+). His571 serves as the catalytic Tele-phosphohistidine intermediate; for EIIA activity. His571 is subject to Phosphohistidine; by HPr.

Requires Zn(2+) as cofactor.

The protein resides in the cell inner membrane. The enzyme catalyses N(pros)-phospho-L-histidyl-[protein] + N-acetyl-D-glucosamine(out) = N-acetyl-D-glucosamine 6-phosphate(in) + L-histidyl-[protein]. Functionally, the phosphoenolpyruvate-dependent sugar phosphotransferase system (sugar PTS), a major carbohydrate active transport system, catalyzes the phosphorylation of incoming sugar substrates concomitantly with their translocation across the cell membrane. This system is involved in N-acetylglucosamine transport. The polypeptide is PTS system N-acetylglucosamine-specific EIICBA component (nagE) (Klebsiella pneumoniae).